We begin with the raw amino-acid sequence, 122 residues long: Flagellar protein FliT (122 aa).

Positions 1–50 (MTSTVEFINRWQRIALLSQSLLELAQRGEWELLLQQEVSYLQSIETVMEK) are required for homodimerization. Positions 60 to 98 (IQDMVAGYIKQTLDNEQRLKGLLQQRLDELSGLIGQSTR) are fliD binding.

Belongs to the FliT family. Homodimer. Interacts with FliD and FlhC.

The protein localises to the cytoplasm. The protein resides in the cytosol. In terms of biological role, dual-function protein that regulates the transcription of class 2 flagellar operons and that also acts as an export chaperone for the filament-capping protein FliD. As a transcriptional regulator, acts as an anti-FlhDC factor; it directly binds FlhC, thus inhibiting the binding of the FlhC/FlhD complex to class 2 promoters, resulting in decreased expression of class 2 flagellar operons. As a chaperone, effects FliD transition to the membrane by preventing its premature polymerization, and by directing it to the export apparatus. The protein is Flagellar protein FliT of Salmonella arizonae (strain ATCC BAA-731 / CDC346-86 / RSK2980).